A 326-amino-acid chain; its full sequence is Biotin synthase (326 aa).

Residues 51 to 278 form the Radical SAM core domain; the sequence is NEVQRSTLLS…TSYVRLSAGR (228 aa). Positions 66, 70, and 73 each coordinate [4Fe-4S] cluster. Positions 110, 141, 201, and 273 each coordinate [2Fe-2S] cluster.

This sequence belongs to the radical SAM superfamily. Biotin synthase family. In terms of assembly, homodimer. The cofactor is [4Fe-4S] cluster. [2Fe-2S] cluster serves as cofactor.

The catalysed reaction is (4R,5S)-dethiobiotin + (sulfur carrier)-SH + 2 reduced [2Fe-2S]-[ferredoxin] + 2 S-adenosyl-L-methionine = (sulfur carrier)-H + biotin + 2 5'-deoxyadenosine + 2 L-methionine + 2 oxidized [2Fe-2S]-[ferredoxin]. It participates in cofactor biosynthesis; biotin biosynthesis; biotin from 7,8-diaminononanoate: step 2/2. Functionally, catalyzes the conversion of dethiobiotin (DTB) to biotin by the insertion of a sulfur atom into dethiobiotin via a radical-based mechanism. This chain is Biotin synthase, found in Azoarcus sp. (strain BH72).